A 125-amino-acid chain; its full sequence is MASSILLTLITFIFLSSLSLSSPTTNTIPSSQTISPSEEKISPEIAPLLPSPAVSSTQTIPSSSTLPEPENDDVSADPDPAFAPSASPPASSLASLSSQAPGVFIYFVFAAVYCFSLRLLAVSAI.

An N-terminal signal peptide occupies residues 1-21 (MASSILLTLITFIFLSSLSLS). Low complexity predominate over residues 20 to 36 (LSSPTTNTIPSSQTISP). The tract at residues 20-95 (LSSPTTNTIP…ASPPASSLAS (76 aa)) is disordered. The segment covering 53–66 (AVSSTQTIPSSSTL) has biased composition (polar residues). A compositionally biased stretch (low complexity) spans 77 to 95 (DPDPAFAPSASPPASSLAS). The GPI-anchor amidated serine moiety is linked to residue S98. The propeptide at 99 to 125 (QAPGVFIYFVFAAVYCFSLRLLAVSAI) is removed in mature form.

The protein belongs to the classical AGP family. Post-translationally, O-glycosylated on the hydroxyproline residues.

Its subcellular location is the cell membrane. Proteoglycan that seems to be implicated in diverse developmental roles such as differentiation, cell-cell recognition, embryogenesis and programmed cell death. The chain is Classical arabinogalactan protein 27 (AGP27) from Arabidopsis thaliana (Mouse-ear cress).